Consider the following 556-residue polypeptide: Formate--tetrahydrofolate ligase (556 aa).

65-72 (TPAGEGKT) contributes to the ATP binding site.

Belongs to the formate--tetrahydrofolate ligase family.

The catalysed reaction is (6S)-5,6,7,8-tetrahydrofolate + formate + ATP = (6R)-10-formyltetrahydrofolate + ADP + phosphate. Its pathway is one-carbon metabolism; tetrahydrofolate interconversion. In Maricaulis maris (strain MCS10) (Caulobacter maris), this protein is Formate--tetrahydrofolate ligase.